The sequence spans 271 residues: Thiazole synthase (271 aa).

Lys95 functions as the Schiff-base intermediate with DXP in the catalytic mechanism. 1-deoxy-D-xylulose 5-phosphate contacts are provided by residues Gly156, 182 to 183, and 204 to 205; these read AG and NT.

Belongs to the ThiG family. In terms of assembly, homotetramer. Forms heterodimers with either ThiH or ThiS.

It localises to the cytoplasm. It catalyses the reaction [ThiS sulfur-carrier protein]-C-terminal-Gly-aminoethanethioate + 2-iminoacetate + 1-deoxy-D-xylulose 5-phosphate = [ThiS sulfur-carrier protein]-C-terminal Gly-Gly + 2-[(2R,5Z)-2-carboxy-4-methylthiazol-5(2H)-ylidene]ethyl phosphate + 2 H2O + H(+). Its pathway is cofactor biosynthesis; thiamine diphosphate biosynthesis. In terms of biological role, catalyzes the rearrangement of 1-deoxy-D-xylulose 5-phosphate (DXP) to produce the thiazole phosphate moiety of thiamine. Sulfur is provided by the thiocarboxylate moiety of the carrier protein ThiS. In vitro, sulfur can be provided by H(2)S. In Yersinia pseudotuberculosis serotype O:1b (strain IP 31758), this protein is Thiazole synthase.